A 628-amino-acid polypeptide reads, in one-letter code: MTWSQDLAHKTYSIRHWADGYFEVNDAGHMVVMPLGGDGVRISLPEVVDAARAAGAKLPLLLRFPDILGHRLGKLQAAFAQAQSEWEYAGGYTAVYPIKVNQHRGVAGVLASHQGDGFGLEAGSKPELMAVLALSRPGGLIVCNGYKDREYIRLALIGRKLGLKTFIVIEKPSELRMVLEEAKTLDVLPGLGVRVRLASLGAGKWQNSGGDKAKFGLSPRQVLDVWKVLRGTEYADCLNVMHFHMGSQISNVRDIAKGMREATRYFVELSRLGAKITHVDVGGGLGIDYEGTRSRSDCSINYGLQAYASHIVQPLASACEDYDLVPPRIVTECGRAMTAHHAVLIANVTEVEAVPEGRVPGVCDDEPAVVRHMREIYGELDARPAIELFYEAQHFHAEGLAAYTLGQIDLVHRARIDDLFYAISHGVRERLSHEEKSHRPVLDELNERLVDKYFVNFSVFESIPDVWAINQIFPIVPIERLNEVPTRRGVVCDLTCDSDGTVKQYVENESLDSALPLHVLRHGEAYRIGFFLVGAYQEILGDIHNLFGDTDAVEVAVDGRGYRIAQQRCGDTTDVMLDYVGYALDEVRRVYAQRIAAAGMSAAESKALSDMLEAGLTGYPYLSDVPLE.

Lys99 is subject to N6-(pyridoxal phosphate)lysine. Position 279–289 (279–289 (VDVGGGLGIDY)) interacts with substrate.

The protein belongs to the Orn/Lys/Arg decarboxylase class-II family. SpeA subfamily. It depends on Mg(2+) as a cofactor. The cofactor is pyridoxal 5'-phosphate.

It catalyses the reaction L-arginine + H(+) = agmatine + CO2. It participates in amine and polyamine biosynthesis; agmatine biosynthesis; agmatine from L-arginine: step 1/1. Catalyzes the biosynthesis of agmatine from arginine. This Xylella fastidiosa (strain M23) protein is Biosynthetic arginine decarboxylase.